The chain runs to 394 residues: NAD(P)H-quinone oxidoreductase subunit H (394 aa).

It belongs to the complex I 49 kDa subunit family. In terms of assembly, NDH-1 can be composed of about 15 different subunits; different subcomplexes with different compositions have been identified which probably have different functions.

The protein localises to the cellular thylakoid membrane. The enzyme catalyses a plastoquinone + NADH + (n+1) H(+)(in) = a plastoquinol + NAD(+) + n H(+)(out). The catalysed reaction is a plastoquinone + NADPH + (n+1) H(+)(in) = a plastoquinol + NADP(+) + n H(+)(out). NDH-1 shuttles electrons from an unknown electron donor, via FMN and iron-sulfur (Fe-S) centers, to quinones in the respiratory and/or the photosynthetic chain. The immediate electron acceptor for the enzyme in this species is believed to be plastoquinone. Couples the redox reaction to proton translocation, and thus conserves the redox energy in a proton gradient. Cyanobacterial NDH-1 also plays a role in inorganic carbon-concentration. This is NAD(P)H-quinone oxidoreductase subunit H from Synechococcus sp. (strain CC9311).